An 89-amino-acid chain; its full sequence is Small ribosomal subunit protein uS15 (89 aa).

Over residues 1–21 (MALTTEEKKQVLSEYGLHETD) the composition is skewed to basic and acidic residues. The tract at residues 1 to 24 (MALTTEEKKQVLSEYGLHETDTGS) is disordered.

The protein belongs to the universal ribosomal protein uS15 family. Part of the 30S ribosomal subunit. Forms a bridge to the 50S subunit in the 70S ribosome, contacting the 23S rRNA.

Its function is as follows. One of the primary rRNA binding proteins, it binds directly to 16S rRNA where it helps nucleate assembly of the platform of the 30S subunit by binding and bridging several RNA helices of the 16S rRNA. Forms an intersubunit bridge (bridge B4) with the 23S rRNA of the 50S subunit in the ribosome. This Rhodococcus jostii (strain RHA1) protein is Small ribosomal subunit protein uS15.